A 381-amino-acid chain; its full sequence is Alkanesulfonate monooxygenase (381 aa).

It belongs to the SsuD family. Homotetramer.

The enzyme catalyses an alkanesulfonate + FMNH2 + O2 = an aldehyde + FMN + sulfite + H2O + 2 H(+). Catalyzes the desulfonation of aliphatic sulfonates. This Escherichia coli (strain SMS-3-5 / SECEC) protein is Alkanesulfonate monooxygenase.